We begin with the raw amino-acid sequence, 1792 residues long: Eukaryotic translation initiation factor 4G (1792 aa).

Over residues 1 to 12 (MSQRGDRGEGHA) the composition is skewed to basic and acidic residues. 11 disordered regions span residues 1–285 (MSQR…PRPP), 424–446 (DSSG…TYGS), 491–590 (SPSM…PTPV), 612–659 (NSVP…EDLK), 678–761 (GVNK…NESH), 874–912 (VASE…EITR), 960–993 (SSSI…LDDW), 999–1018 (MSTP…EANG), 1275–1299 (GERE…EERE), 1407–1503 (WQQR…HRTT), and 1537–1600 (ELSS…KLYS). Residues 21–42 (FGGGHRGGGGVGGAGKGGGGSS) are compositionally biased toward gly residues. The segment covering 88-107 (PLRPPAPQNAPAHVPVPAPR) has biased composition (pro residues). Polar residues-rich tracts occupy residues 147–156 (RISSTSTSQG) and 179–191 (STMQ…SSAP). 3 stretches are compositionally biased toward low complexity: residues 216–243 (PQAP…PLQQ), 263–278 (PSQV…SVPN), and 432–442 (PSVQQQSQPVS). Positions 491–517 (SPSMNTGPGSNKDNLAGSTTSGHSQVT) are enriched in polar residues. 3 stretches are compositionally biased toward basic and acidic residues: residues 545–564 (DVNK…KDNE), 571–587 (KSGE…EKHP), and 633–643 (DSNKNATKDTR). Residues 644–654 (NLSQEPQSASS) are compositionally biased toward polar residues. The segment covering 699-718 (AADASSIDRSSARSTSESTE) has biased composition (low complexity). Residues 964–990 (ADHELPDESSEKEVNMGEDEGKKKVEL) are compositionally biased toward basic and acidic residues. Positions 1018-1030 (GRKRYSRDFLLTL) are EIF4E-binding. The MIF4G domain occupies 1183 to 1406 (QRQLKAILNK…RDSIDLRKNK (224 aa)). Acidic residues predominate over residues 1278–1289 (EEAEADKTEEEG). Composition is skewed to basic and acidic residues over residues 1290–1299 (EIKQTKEERE) and 1411–1432 (RKVE…ERHA). Composition is skewed to low complexity over residues 1439–1450 (RGSVVGSGPRRG) and 1461–1470 (SAAALASPSS). Basic and acidic residues-rich tracts occupy residues 1490–1503 (IRFE…HRTT) and 1559–1572 (AREE…DRSG). The segment covering 1576 to 1593 (PNTQFAGPSNRPASQEGR) has biased composition (polar residues). The MI domain maps to 1603-1727 (DLREKSISAI…SLQEVGTLIE (125 aa)).

It belongs to the eukaryotic initiation factor 4G family. As to quaternary structure, EIF4F is a multi-subunit complex, the composition of which varies with external and internal environmental conditions. It is composed of at least EIF4A, EIF4E and EIF4G. In higher plants two isoforms of EIF4F have been identified, named isoform EIF4F and isoform EIF(iso)4F. Isoform EIF4F has subunits p220 and p26, whereas isoform EIF(iso)4F has subunits p82 and p28.

In terms of biological role, component of the protein complex eIF4F, which is involved in the recognition of the mRNA cap, ATP-dependent unwinding of 5'-terminal secondary structure and recruitment of mRNA to the ribosome. The protein is Eukaryotic translation initiation factor 4G of Oryza sativa subsp. japonica (Rice).